Here is a 370-residue protein sequence, read N- to C-terminus: Type II restriction enzyme MjaII (370 aa).

This sequence belongs to the TdeIII type II restriction endonuclease family.

It carries out the reaction Endonucleolytic cleavage of DNA to give specific double-stranded fragments with terminal 5'-phosphates.. A P subtype restriction enzyme that recognizes the double-stranded sequence 5'-GGNCC-3'; the cleavage site is unknown. This chain is Type II restriction enzyme MjaII (mjaIIR), found in Methanocaldococcus jannaschii (strain ATCC 43067 / DSM 2661 / JAL-1 / JCM 10045 / NBRC 100440) (Methanococcus jannaschii).